The sequence spans 205 residues: LexA repressor (205 aa).

Residues 28–48 (VREIGEAVGLASSSTVHGHLA) constitute a DNA-binding region (H-T-H motif). Catalysis depends on for autocatalytic cleavage activity residues Ser-127 and Lys-165.

The protein belongs to the peptidase S24 family. Homodimer. Following treatment with mitomycin C protein levels begin to decrease after a 5-min lag and do not return to their original levels for at least 90 minutes.

It catalyses the reaction Hydrolysis of Ala-|-Gly bond in repressor LexA.. Represses dinA, dinB, dinC, recA genes and itself by binding to the 14 bp palindromic sequence 5'-CGAACNNNNGTTCG-3'; some genes have a tandem consensus sequence and their binding is cooperative. In the presence of single-stranded DNA, RecA interacts with LexA causing an autocatalytic cleavage which disrupts the DNA-binding part of LexA, leading to derepression of the SOS regulon and eventually DNA repair; autocleavage is maximal at pH 11 in the absence of RecA and ssDNA. The polypeptide is LexA repressor (Bacillus subtilis (strain 168)).